We begin with the raw amino-acid sequence, 271 residues long: MRSLLAASTFLRSGASPLLRPLSRPLPSRLNLSRFGPVRPVSAAAAAADKSRGGGGSAMEAQPSYPGEIHVIVGPMFAGKTTALLRRVQVEAGTGSRNVALIKSDKDNRYGLDSVVTHDGTKMPCWALPELSSFQDKLGTEAYDKVDVIGIDEAQFFDDLHDFCCKAADRDGKIVVVAGLDGDYKRNKFGSVLDIIPLADSVTKLTARCELCGRRAFFTLRKTRETKTELIGGADVYMPVCRQHYLDGQIVIEATRIVLDLEKSKVIHAFK.

Residues 74 to 81 (GPMFAGKT) and 152 to 155 (DEAQ) each bind ATP. The active-site Proton acceptor is the E153. Residue Y184 participates in substrate binding. Zn(2+)-binding residues include C209 and C212. Residue Y237 coordinates substrate. Zn(2+) is bound at residue C241.

Belongs to the thymidine kinase family.

It carries out the reaction thymidine + ATP = dTMP + ADP + H(+). The polypeptide is Thymidine kinase (TK) (Oryza sativa subsp. japonica (Rice)).